Here is a 413-residue protein sequence, read N- to C-terminus: Multifunctional CCA protein (413 aa).

ATP is bound by residues glycine 8 and arginine 11. CTP contacts are provided by glycine 8 and arginine 11. Aspartate 21 and aspartate 23 together coordinate Mg(2+). Residues arginine 91, arginine 137, and arginine 140 each contribute to the ATP site. The CTP site is built by arginine 91, arginine 137, and arginine 140. The 102-residue stretch at 228-329 (TGIHTLMVLE…VKLFDKADLW (102 aa)) folds into the HD domain.

It belongs to the tRNA nucleotidyltransferase/poly(A) polymerase family. Bacterial CCA-adding enzyme type 1 subfamily. Monomer. Can also form homodimers and oligomers. Mg(2+) serves as cofactor. The cofactor is Ni(2+).

It catalyses the reaction a tRNA precursor + 2 CTP + ATP = a tRNA with a 3' CCA end + 3 diphosphate. It carries out the reaction a tRNA with a 3' CCA end + 2 CTP + ATP = a tRNA with a 3' CCACCA end + 3 diphosphate. Functionally, catalyzes the addition and repair of the essential 3'-terminal CCA sequence in tRNAs without using a nucleic acid template. Adds these three nucleotides in the order of C, C, and A to the tRNA nucleotide-73, using CTP and ATP as substrates and producing inorganic pyrophosphate. tRNA 3'-terminal CCA addition is required both for tRNA processing and repair. Also involved in tRNA surveillance by mediating tandem CCA addition to generate a CCACCA at the 3' terminus of unstable tRNAs. While stable tRNAs receive only 3'-terminal CCA, unstable tRNAs are marked with CCACCA and rapidly degraded. The polypeptide is Multifunctional CCA protein (Shewanella loihica (strain ATCC BAA-1088 / PV-4)).